The chain runs to 402 residues: CCA-adding enzyme (402 aa).

Residues Gly32 and Arg35 each contribute to the ATP site. Residues Gly32 and Arg35 each coordinate CTP. Asp45 and Asp47 together coordinate Mg(2+). Residues Arg116, Asp159, Arg162, Arg165, and Arg168 each coordinate ATP. CTP contacts are provided by Arg116, Asp159, Arg162, Arg165, and Arg168.

It belongs to the tRNA nucleotidyltransferase/poly(A) polymerase family. Bacterial CCA-adding enzyme type 3 subfamily. In terms of assembly, homodimer. Requires Mg(2+) as cofactor.

The enzyme catalyses a tRNA precursor + 2 CTP + ATP = a tRNA with a 3' CCA end + 3 diphosphate. It catalyses the reaction a tRNA with a 3' CCA end + 2 CTP + ATP = a tRNA with a 3' CCACCA end + 3 diphosphate. In terms of biological role, catalyzes the addition and repair of the essential 3'-terminal CCA sequence in tRNAs without using a nucleic acid template. Adds these three nucleotides in the order of C, C, and A to the tRNA nucleotide-73, using CTP and ATP as substrates and producing inorganic pyrophosphate. tRNA 3'-terminal CCA addition is required both for tRNA processing and repair. Also involved in tRNA surveillance by mediating tandem CCA addition to generate a CCACCA at the 3' terminus of unstable tRNAs. While stable tRNAs receive only 3'-terminal CCA, unstable tRNAs are marked with CCACCA and rapidly degraded. This chain is CCA-adding enzyme, found in Streptococcus pyogenes serotype M3 (strain ATCC BAA-595 / MGAS315).